A 125-amino-acid polypeptide reads, in one-letter code: Small ribosomal subunit protein uS13 (125 aa).

A disordered region spans residues 90 to 125; that stretch reads QRHRKGLPVRGQRTKTNARTRKGPKRTVAGKKKATK.

This sequence belongs to the universal ribosomal protein uS13 family. Part of the 30S ribosomal subunit. Forms a loose heterodimer with protein S19. Forms two bridges to the 50S subunit in the 70S ribosome.

Functionally, located at the top of the head of the 30S subunit, it contacts several helices of the 16S rRNA. In the 70S ribosome it contacts the 23S rRNA (bridge B1a) and protein L5 of the 50S subunit (bridge B1b), connecting the 2 subunits; these bridges are implicated in subunit movement. Contacts the tRNAs in the A and P-sites. The sequence is that of Small ribosomal subunit protein uS13 from Bifidobacterium longum (strain DJO10A).